Here is a 190-residue protein sequence, read N- to C-terminus: CASP-like protein 1E1 (190 aa).

The segment at 1–21 (MEHESKTKMDGIEMEKGKKEN) is disordered. Over 1–28 (MEHESKTKMDGIEMEKGKKENGSRKGVE) the chain is Cytoplasmic. Residues 29–49 (ITMRVLALVLTMVAATVLGVA) form a helical membrane-spanning segment. Over 50 to 83 (KQTEVVPIKLIPTLPPLNVATTAKASYLSAFVYN) the chain is Extracellular. Residues 84–104 (ICANAIACGYTAISIMIVIIS) traverse the membrane as a helical segment. Over 105–111 (KGRRSKC) the chain is Cytoplasmic. Residues 112–132 (LLMAVLIGDLMMVALLCSSTG) traverse the membrane as a helical segment. Residues 133 to 163 (AAGAIGLMGRHGNKHVMWKKVCGVFGKFCNQ) are Extracellular-facing. Residues 164 to 184 (AAVSVAITLIASVVFMLLVVL) traverse the membrane as a helical segment. Residues 185 to 190 (DALKLP) are Cytoplasmic-facing.

This sequence belongs to the Casparian strip membrane proteins (CASP) family. As to quaternary structure, homodimer and heterodimers.

It localises to the cell membrane. This Arabidopsis lyrata subsp. lyrata (Lyre-leaved rock-cress) protein is CASP-like protein 1E1.